Here is a 454-residue protein sequence, read N- to C-terminus: Kynurenine--oxoglutarate transaminase 3 (454 aa).

Gly-71 provides a ligand contact to substrate. An N6-acetyllysine; alternate modification is found at Lys-116. At Lys-116 the chain carries N6-succinyllysine; alternate. Asn-218 lines the substrate pocket. N6-(pyridoxal phosphate)lysine is present on Lys-280. Residue Arg-429 participates in substrate binding.

It belongs to the class-I pyridoxal-phosphate-dependent aminotransferase family. Homodimer. The cofactor is pyridoxal 5'-phosphate.

It carries out the reaction L-kynurenine + 2-oxoglutarate = kynurenate + L-glutamate + H2O. The catalysed reaction is L-kynurenine + glyoxylate = kynurenate + glycine + H2O. It catalyses the reaction 3-hydroxy-L-kynurenine + glyoxylate = xanthurenate + glycine + H2O. The enzyme catalyses an S-substituted L-cysteine + H2O = a thiol + pyruvate + NH4(+). It participates in amino-acid degradation; L-kynurenine degradation; kynurenate from L-kynurenine: step 1/2. Its function is as follows. Catalyzes the irreversible transamination of the L-tryptophan metabolite L-kynurenine to form kynurenic acid (KA), an intermediate in the tryptophan catabolic pathway which is also a broad spectrum antagonist of the three ionotropic excitatory amino acid receptors among others. May catalyze the beta-elimination of S-conjugates and Se-conjugates of L-(seleno)cysteine, resulting in the cleavage of the C-S or C-Se bond. Has transaminase activity towards L-kynurenine, tryptophan, phenylalanine, serine, cysteine, methionine, histidine, glutamine and asparagine with glyoxylate as an amino group acceptor (in vitro). Has lower activity with 2-oxoglutarate as amino group acceptor (in vitro). The chain is Kynurenine--oxoglutarate transaminase 3 from Rattus norvegicus (Rat).